Here is a 215-residue protein sequence, read N- to C-terminus: Vesicle-trafficking protein SEC22b (215 aa).

The Cytoplasmic portion of the chain corresponds to 1 to 194 (MVLLTMIARV…KYLNMRSTYA (194 aa)). The Longin domain maps to 6-119 (MIARVADGLP…YSFIEFDTFI (114 aa)). Lys-38 bears the N6-acetyllysine mark. One can recognise a v-SNARE coiled-coil homology domain in the interval 134-194 (NLGSINTELQ…KYLNMRSTYA (61 aa)). The residue at position 137 (Ser-137) is a Phosphoserine. Thr-140 bears the Phosphothreonine mark. Phosphoserine is present on residues Ser-164, Ser-168, Ser-174, and Ser-177. A helical; Anchor for type IV membrane protein transmembrane segment spans residues 195–215 (KLAAVAVFFIMLIVYVRFWWL).

It belongs to the synaptobrevin family. In terms of assembly, interacts with STX17. Component of two distinct SNARE complexes consisting of STX5, GOSR2/BOS1, BET1 and SEC22B or STX18, USE1L, BNIP1/SEC20L and SEC22B. YKT6 can probably replace SEC22B as subunit of either complex. Interacts with the COPII Sec23/24 complex composed of SEC23A and SEC24A; recruits SEC22B into COPII-coated vesicles to allow its transport from the endoplasmic reticulum to the Golgi. Interacts with BET1.

The protein localises to the endoplasmic reticulum membrane. It is found in the endoplasmic reticulum-Golgi intermediate compartment membrane. Its subcellular location is the golgi apparatus. The protein resides in the cis-Golgi network membrane. It localises to the trans-Golgi network membrane. The protein localises to the melanosome. SNARE involved in targeting and fusion of ER-derived transport vesicles with the Golgi complex as well as Golgi-derived retrograde transport vesicles with the ER. This chain is Vesicle-trafficking protein SEC22b (Sec22b), found in Cricetulus griseus (Chinese hamster).